The sequence spans 71 residues: Translational regulator CsrA (71 aa).

The interval 50-71 (RIRHEKDGDVPEAAPGQGADPQ) is disordered.

Belongs to the CsrA/RsmA family. Homodimer; the beta-strands of each monomer intercalate to form a hydrophobic core, while the alpha-helices form wings that extend away from the core.

Its subcellular location is the cytoplasm. A key translational regulator that binds mRNA to regulate translation initiation and/or mRNA stability. Mediates global changes in gene expression, shifting from rapid growth to stress survival by linking envelope stress, the stringent response and the catabolite repression systems. Usually binds in the 5'-UTR; binding at or near the Shine-Dalgarno sequence prevents ribosome-binding, repressing translation, binding elsewhere in the 5'-UTR can activate translation and/or stabilize the mRNA. Its function is antagonized by small RNA(s). The polypeptide is Translational regulator CsrA (Halorhodospira halophila (strain DSM 244 / SL1) (Ectothiorhodospira halophila (strain DSM 244 / SL1))).